Here is a 128-residue protein sequence, read N- to C-terminus: Sulfurtransferase TusD (128 aa).

The Cysteine persulfide intermediate role is filled by Cys-78.

This sequence belongs to the DsrE/TusD family. In terms of assembly, heterohexamer, formed by a dimer of trimers. The hexameric TusBCD complex contains 2 copies each of TusB, TusC and TusD. The TusBCD complex interacts with TusE.

The protein localises to the cytoplasm. Its function is as follows. Part of a sulfur-relay system required for 2-thiolation of 5-methylaminomethyl-2-thiouridine (mnm(5)s(2)U) at tRNA wobble positions. Accepts sulfur from TusA and transfers it in turn to TusE. This chain is Sulfurtransferase TusD, found in Salmonella agona (strain SL483).